The following is a 485-amino-acid chain: Zinc finger SWIM domain-containing protein 1 (485 aa).

The SWIM-type zinc-finger motif lies at 363 to 405 (MNIQILEDTHKVQPQPPASCSCYFNQAFHLPCRHILAMLSARR).

The polypeptide is Zinc finger SWIM domain-containing protein 1 (ZSWIM1) (Homo sapiens (Human)).